We begin with the raw amino-acid sequence, 255 residues long: S-adenosyl-L-methionine-dependent uroporphyrinogen III methyltransferase (255 aa).

S-adenosyl-L-homocysteine is bound by residues Pro15, 91–93 (GGD), 121–122 (TS), Met175, and Ala232.

This sequence belongs to the precorrin methyltransferase family. As to quaternary structure, homodimer.

The catalysed reaction is uroporphyrinogen III + 2 S-adenosyl-L-methionine = precorrin-2 + 2 S-adenosyl-L-homocysteine + H(+). It functions in the pathway porphyrin-containing compound metabolism; siroheme biosynthesis; precorrin-2 from uroporphyrinogen III: step 1/1. Functionally, involved in the archaeal biosynthesis of heme. Catalyzes the methylation of carbons 2 and 7 of uroporphyrinogen-III (UROGEN) to yield precorrin-2. It does not catalyze the overmethylation of precorrin-2 to trimethylpyrrocorphin. The sequence is that of S-adenosyl-L-methionine-dependent uroporphyrinogen III methyltransferase from Methanosarcina barkeri (strain Fusaro / DSM 804).